We begin with the raw amino-acid sequence, 345 residues long: Phenylalanine--tRNA ligase alpha subunit (345 aa).

Glu262 serves as a coordination point for Mg(2+).

The protein belongs to the class-II aminoacyl-tRNA synthetase family. Phe-tRNA synthetase alpha subunit type 1 subfamily. As to quaternary structure, tetramer of two alpha and two beta subunits. Requires Mg(2+) as cofactor.

It is found in the cytoplasm. The enzyme catalyses tRNA(Phe) + L-phenylalanine + ATP = L-phenylalanyl-tRNA(Phe) + AMP + diphosphate + H(+). In Ehrlichia canis (strain Jake), this protein is Phenylalanine--tRNA ligase alpha subunit.